A 204-amino-acid polypeptide reads, in one-letter code: Small ribosomal subunit protein uS4 (204 aa).

One can recognise an S4 RNA-binding domain in the interval 93-156 (SRLSSVLYHS…AKIPVVVEAE (64 aa)).

The protein belongs to the universal ribosomal protein uS4 family. As to quaternary structure, part of the 30S ribosomal subunit. Contacts protein S5. The interaction surface between S4 and S5 is involved in control of translational fidelity.

Functionally, one of the primary rRNA binding proteins, it binds directly to 16S rRNA where it nucleates assembly of the body of the 30S subunit. Its function is as follows. With S5 and S12 plays an important role in translational accuracy. The protein is Small ribosomal subunit protein uS4 of Wolbachia pipientis wMel.